The following is a 739-amino-acid chain: MSVEHPPIGEANTEPAAGGCPVTGRLRHPLQGGGNHEWWPNQLNLKVLAKNPAEGNPLGDFDYKAAFNSLDLAAVKADIAEVLTTSQDWWPADFGNYGPLMIRMAWHSAGTYRSSDGRGGANTGQQRFAPLNSWPDNGNLDKARRLLWPVKKKYGQNISWADLMILAGNVALETMGFKTFGFAGGRVDVWEPEEDVYWGPEAEWLGDKRYSGERDLENPLAAVQMGLIYVNPEGPNGNPDPLAAAVDIKDTFGRMGMTVEETVALIAGGHTFGKTHGAGDAALVGAEPEAAPLEQMGLGWKSSHGTGKGADAITSGLEVVWTTKPTQWSNDFFEILFGYEWELTKSPAGANQWVAKDAQPIIPDPFDPAKKRLPTMLTTDLSLRVDPEMEVISRRFKDNPDEFADAFARAWFKLTHRDLGPVTRYLGPEVPSEVQLWQDPIPAVDHELVDAADIAALKEQILASELSISQLVKTAWAAASSFRGSDYRGGANGGRIRLQPQLGWEVNEPDELARVIAVLEGIQEQFNAAQTGNKKVSFADLVVLGGVAAVEQAARNAGVAVEVPFTPGRADTTQELTDPEGFAVLEPKADGFRNYLGKANPLPAEYLLVDKANLLTLTAPEMTVLVGGLRVLNANYQRSPLGVLTETPESLTNDFFVNLLDMGVVWEPSPADDGTYVGKDAATGAQKWTGSRVDLLFGSNSVLRSLAEVYATDDAKPKFVQDFVAAWNKVMNLDRFDLA.

The tract at residues 1–33 (MSVEHPPIGEANTEPAAGGCPVTGRLRHPLQGG) is disordered. Residues 106–229 (WHSAGTYRSS…LAAVQMGLIY (124 aa)) constitute a cross-link (tryptophyl-tyrosyl-methioninium (Trp-Tyr) (with M-255)). Catalysis depends on His-107, which acts as the Proton acceptor. The interval 113–134 (RSSDGRGGANTGQQRFAPLNSW) is disordered. The segment at residues 229-255 (YVNPEGPNGNPDPLAAAVDIKDTFGRM) is a cross-link (tryptophyl-tyrosyl-methioninium (Tyr-Met) (with W-106)). His-270 is a heme b binding site.

This sequence belongs to the peroxidase family. Peroxidase/catalase subfamily. Homodimer or homotetramer. Requires heme b as cofactor. Formation of the three residue Trp-Tyr-Met cross-link is important for the catalase, but not the peroxidase activity of the enzyme.

The catalysed reaction is H2O2 + AH2 = A + 2 H2O. It catalyses the reaction 2 H2O2 = O2 + 2 H2O. In terms of biological role, bifunctional enzyme with both catalase and broad-spectrum peroxidase activity. The protein is Catalase-peroxidase of Nocardia farcinica (strain IFM 10152).